The chain runs to 314 residues: DNA-directed RNA polymerase subunit alpha (314 aa).

Residues Met-1–Thr-228 are alpha N-terminal domain (alpha-NTD). The tract at residues Lys-245 to Asp-314 is alpha C-terminal domain (alpha-CTD).

It belongs to the RNA polymerase alpha chain family. As to quaternary structure, homodimer. RNAP is composed of a core of 2 alpha, a beta and a beta' subunit. The core is associated with a delta subunit, and at least one of epsilon or omega. When a sigma factor is associated with the core the holoenzyme is formed, which can initiate transcription.

The enzyme catalyses RNA(n) + a ribonucleoside 5'-triphosphate = RNA(n+1) + diphosphate. DNA-dependent RNA polymerase catalyzes the transcription of DNA into RNA using the four ribonucleoside triphosphates as substrates. This Bacillus subtilis (strain 168) protein is DNA-directed RNA polymerase subunit alpha.